The following is a 378-amino-acid chain: Beta sliding clamp (378 aa).

This sequence belongs to the beta sliding clamp family. In terms of assembly, forms a ring-shaped head-to-tail homodimer around DNA which binds and tethers DNA polymerases and other proteins to the DNA. The DNA replisome complex has a single clamp-loading complex (3 tau and 1 each of delta, delta', psi and chi subunits) which binds 3 Pol III cores (1 core on the leading strand and 2 on the lagging strand) each with a beta sliding clamp dimer. Additional proteins in the replisome are other copies of gamma, psi and chi, Ssb, DNA helicase and RNA primase. Interacts with YabA, and via YabA, with DnaA. During sporulation probably interacts with SirA.

The protein localises to the cytoplasm. It is found in the nucleoid. Its function is as follows. Confers DNA tethering and processivity to DNA polymerases and other proteins. Acts as a clamp, forming a ring around DNA (a reaction catalyzed by the clamp-loading complex) which diffuses in an ATP-independent manner freely and bidirectionally along dsDNA. Initially characterized for its ability to contact the catalytic subunit of DNA polymerase III (Pol III), a complex, multichain enzyme responsible for most of the replicative synthesis in bacteria; Pol III exhibits 3'-5' exonuclease proofreading activity. The beta chain is required for initiation of replication as well as for processivity of DNA replication. Overexpression in vivo stimulates inititation of DNA replication from oriC. Increased levels of DnaN remove YabA from its association with DnaA on the chromosome, allowing DnaA to bind to its targets. Its interaction with DnaA probably serves as a sink to prevent excessive replication initiation. In Bacillus subtilis (strain 168), this protein is Beta sliding clamp.